We begin with the raw amino-acid sequence, 371 residues long: Pyruvate dehydrogenase E1 component subunit alpha (371 aa).

In terms of assembly, heterodimer of an alpha and a beta chain. Thiamine diphosphate is required as a cofactor.

It catalyses the reaction N(6)-[(R)-lipoyl]-L-lysyl-[protein] + pyruvate + H(+) = N(6)-[(R)-S(8)-acetyldihydrolipoyl]-L-lysyl-[protein] + CO2. The pyruvate dehydrogenase complex catalyzes the overall conversion of pyruvate to acetyl-CoA and CO(2). It contains multiple copies of three enzymatic components: pyruvate dehydrogenase (E1), dihydrolipoamide acetyltransferase (E2) and lipoamide dehydrogenase (E3). The polypeptide is Pyruvate dehydrogenase E1 component subunit alpha (Bacillus cereus).